We begin with the raw amino-acid sequence, 133 residues long: Small ribosomal subunit protein eS24z (133 aa).

The disordered stretch occupies residues 104-133 (KSRKQIKERKNRAKKIRGVKKTKAGDAKKK). Residues 109-125 (IKERKNRAKKIRGVKKT) are compositionally biased toward basic residues.

This sequence belongs to the eukaryotic ribosomal protein eS24 family.

This is Small ribosomal subunit protein eS24z (RPS24A) from Arabidopsis thaliana (Mouse-ear cress).